We begin with the raw amino-acid sequence, 142 residues long: Large ribosomal subunit protein uL11 (142 aa).

Belongs to the universal ribosomal protein uL11 family. Part of the ribosomal stalk of the 50S ribosomal subunit. Interacts with L10 and the large rRNA to form the base of the stalk. L10 forms an elongated spine to which L12 dimers bind in a sequential fashion forming a multimeric L10(L12)X complex. One or more lysine residues are methylated.

Functionally, forms part of the ribosomal stalk which helps the ribosome interact with GTP-bound translation factors. This chain is Large ribosomal subunit protein uL11, found in Bartonella tribocorum (strain CIP 105476 / IBS 506).